Reading from the N-terminus, the 804-residue chain is RasGAP-activating-like protein 1 (804 aa).

C2 domains lie at 1–105 (MAKS…DSWI) and 116–231 (VQGE…KGWF). Residues Asp-21, Asp-27, Asp-74, Asp-76, Asp-82, Asp-149, Asp-155, Asp-202, Asp-204, and Asp-210 each contribute to the Ca(2+) site. The Ras-GAP domain occupies 317 to 545 (GLAGRFLDYL…SRVRDFLDRL (229 aa)). One can recognise a PH domain in the interval 565-672 (AIVREGYLLK…WLSALRKASA (108 aa)). The Btk-type zinc-finger motif lies at 674-710 (NPNKLAACHPGAFRSARWTCCLQAERSAAGCSRTHSA). The Zn(2+) site is built by His-682, Cys-693, Cys-694, and Cys-704.

It depends on Ca(2+) as a cofactor. In terms of tissue distribution, highly expressed in thyroid and adrenal medulla, lower expression in brain, spinal cord and trachea. Expressed in melanocytes.

Functionally, probable inhibitory regulator of the Ras-cyclic AMP pathway. Plays a role in dendrite formation by melanocytes. The protein is RasGAP-activating-like protein 1 of Homo sapiens (Human).